The chain runs to 207 residues: Acyl-homoserine-lactone synthase (207 aa).

It belongs to the autoinducer synthase family.

It catalyses the reaction a fatty acyl-[ACP] + S-adenosyl-L-methionine = an N-acyl-L-homoserine lactone + S-methyl-5'-thioadenosine + holo-[ACP] + H(+). Functionally, required for the synthesis of N-butanoyl-L-homoserine lactone (BHL), an autoinducer molecule which binds to AsaR. The sequence is that of Acyl-homoserine-lactone synthase (asaI) from Aeromonas salmonicida.